Consider the following 144-residue polypeptide: Large ribosomal subunit protein uL15 (144 aa).

Residues 1-58 (MHLNTLSPAPGSHKARKRCGRGIGSGIGKTGGRGHKGQKSRSGGSVRPGFEGGQMPLK) form a disordered region. The segment covering 21–31 (RGIGSGIGKTG) has biased composition (gly residues).

The protein belongs to the universal ribosomal protein uL15 family. As to quaternary structure, part of the 50S ribosomal subunit.

Its function is as follows. Binds to the 23S rRNA. This Colwellia psychrerythraea (strain 34H / ATCC BAA-681) (Vibrio psychroerythus) protein is Large ribosomal subunit protein uL15.